A 623-amino-acid polypeptide reads, in one-letter code: uncharacterized protein (623 aa).

5 consecutive transmembrane segments (helical) span residues 242 to 262 (IALA…ITWL), 288 to 308 (IVSP…LDIF), 318 to 338 (VSMW…IALF), 361 to 381 (VINL…LLGV), and 387 to 407 (FNVS…ALAV).

Belongs to the MscS (TC 1.A.23) family.

Its subcellular location is the cell membrane. This is an uncharacterized protein from Helicobacter pylori (strain J99 / ATCC 700824) (Campylobacter pylori J99).